Here is an 891-residue protein sequence, read N- to C-terminus: Metabotropic glutamate receptor-like protein N (891 aa).

At 1–399 (MKLYTHKINR…FKPISKTIEY (399 aa)) the chain is on the extracellular side. Residues Asn52, Asn85, Asn88, Asn125, Asn132, Asn224, Asn298, Asn312, Asn320, Asn325, Asn353, Asn363, and Asn375 are each glycosylated (N-linked (GlcNAc...) asparagine). The interval 52 to 91 (NNSNSNSNNNNNNNNNNNNNNNNNNNNNNNNNNNNSNNSN) is disordered. The chain crosses the membrane as a helical span at residues 400–420 (GITIVSSILIGALIIIQICII). The Cytoplasmic portion of the chain corresponds to 421–433 (KYKNKPSFKSASP). A helical membrane pass occupies residues 434–454 (TFLIFIVIGGIFVYIGVIIWV). Residues 455-461 (SGVNVFT) lie on the Extracellular side of the membrane. A helical membrane pass occupies residues 462 to 482 (CNAKFWLISLGLTTMIGGIVV). Over 483 to 505 (KNFRIWLIFDNPKLYHIKITNLQ) the chain is Cytoplasmic. Residues 506–526 (LLPWVLGMFLLNVFLLSLITG) form a helical membrane-spanning segment. Residues 527 to 555 (LGKLTPFKVFPNDEKFSSYEIQCEMMDGG) are Extracellular-facing. A helical transmembrane segment spans residues 556–576 (LIALYFLLGYFAIIVMIGIFV). The Cytoplasmic portion of the chain corresponds to 577–592 (SWKIRIVDIEEFNESK). The helical transmembrane segment at 593 to 613 (SVAYSLYSIVFCLLIIAPLTI) threads the bilayer. Over 614 to 625 (SKTGHNTEILCS) the chain is Extracellular. The helical transmembrane segment at 626–646 (GFIFIVAAIITIMFIPKFWAL) threads the bilayer. The Cytoplasmic portion of the chain corresponds to 647–891 (KIYGAEGSNE…SDSNSDSIIQ (245 aa)). Disordered regions lie at residues 660–689 (QSSSSTSKRKNKSSTTNDPTNLDSISKKSS), 742–827 (NEMT…ILTP), and 869–891 (DEVIENSDSESESSDSNSDSIIQ). The segment covering 742 to 767 (NEMTYNDDPTYTEPSEQPTYTESSEQ) has biased composition (polar residues). Low complexity predominate over residues 772-782 (PRTLTATPRTN). Polar residues predominate over residues 783-820 (DLTTPRTNDLTTPRTNDLITPRTNDLSTPRTNDLNTPR). The segment covering 872 to 881 (IENSDSESES) has biased composition (acidic residues). The span at 882–891 (SDSNSDSIIQ) shows a compositional bias: low complexity.

The protein belongs to the G-protein coupled receptor 3 family. GABA-B receptor subfamily.

The protein localises to the membrane. The chain is Metabotropic glutamate receptor-like protein N (grlN) from Dictyostelium discoideum (Social amoeba).